The chain runs to 907 residues: Schlafen family member 13 (907 aa).

The tract at residues M1–P353 is n'-domain region. Catalysis depends on residues E205 and E210. Residues H281, C283, and C318 each coordinate Zn(2+). G604 to T611 contacts ATP.

The protein belongs to the Schlafen family. Subgroup III subfamily. Mg(2+) serves as cofactor.

Its subcellular location is the cytoplasm. Functionally, endoribonuclease that cleaves tRNAs and rRNAs. Cleaves tRNAs 11 nucleotides from the 3'-terminus at the acceptor stem. Does not act on tRNA(Sec). The chain is Schlafen family member 13 from Rattus norvegicus (Rat).